Reading from the N-terminus, the 1339-residue chain is Retrotransposon Gag-like protein 9 (1339 aa).

Polar residues-rich tracts occupy residues 533–545, 679–693, and 700–711; these read TVPTSGSVSTQKT, SGTKSTSQMTATTSG, and TRLSGPGATSTP. Disordered regions lie at residues 533–555, 679–711, 845–864, 880–901, 982–1010, and 1078–1116; these read TVPTSGSVSTQKTRAPVSGPMST, SGTKSTSQMTATTSGGIFMPQTRLSGPGATSTP, GVMSIPLTRTPASRAKSRPQ, PATAGISPSPVRSPASSTLSTL, ATSLPQPRNAASGVIANPPQRAPASGAGS, and ATDSGEASTSHTRFTAPGSKSTPHMTSTAPEMKTPPPKE. Residues 891-901 are compositionally biased toward low complexity; it reads RSPASSTLSTL. The segment covering 1078–1106 has biased composition (polar residues); it reads ATDSGEASTSHTRFTAPGSKSTPHMTSTA.

This is Retrotransposon Gag-like protein 9 from Mus musculus (Mouse).